A 910-amino-acid polypeptide reads, in one-letter code: Protein translocase subunit SecA (910 aa).

ATP contacts are provided by residues glutamine 87, 105–109, and aspartate 512; that span reads GEGKT. Basic and acidic residues-rich tracts occupy residues 561–571, 841–853, and 880–890; these read RHESRRIDNQL, EEER…ELAR, and TFEREARKVGR. Disordered stretches follow at residues 561-584 and 835-910; these read RHES…AGSS and EEVD…GKIN. Residues cysteine 894, cysteine 896, cysteine 905, and histidine 906 each coordinate Zn(2+). A compositionally biased stretch (basic residues) spans 900–910; it reads KKYKQCHGKIN.

Belongs to the SecA family. In terms of assembly, monomer and homodimer. Part of the essential Sec protein translocation apparatus which comprises SecA, SecYEG and auxiliary proteins SecDF-YajC and YidC. Zn(2+) is required as a cofactor.

It localises to the cell inner membrane. It is found in the cytoplasm. It carries out the reaction ATP + H2O + cellular proteinSide 1 = ADP + phosphate + cellular proteinSide 2.. Its function is as follows. Part of the Sec protein translocase complex. Interacts with the SecYEG preprotein conducting channel. Has a central role in coupling the hydrolysis of ATP to the transfer of proteins into and across the cell membrane, serving both as a receptor for the preprotein-SecB complex and as an ATP-driven molecular motor driving the stepwise translocation of polypeptide chains across the membrane. The polypeptide is Protein translocase subunit SecA (Photobacterium profundum (strain SS9)).